The primary structure comprises 269 residues: 3'(2'),5'-bisphosphate nucleotidase CysQ (269 aa).

Residues glutamate 69, aspartate 89, leucine 91, aspartate 92, and aspartate 216 each coordinate Mg(2+). Glutamate 69 is a substrate binding site. Substrate contacts are provided by residues 91–94 (LDGT) and aspartate 216.

It belongs to the inositol monophosphatase superfamily. CysQ family. Mg(2+) is required as a cofactor.

Its subcellular location is the cell inner membrane. The catalysed reaction is adenosine 3',5'-bisphosphate + H2O = AMP + phosphate. Functionally, converts adenosine-3',5'-bisphosphate (PAP) to AMP. This Haemophilus influenzae (strain ATCC 51907 / DSM 11121 / KW20 / Rd) protein is 3'(2'),5'-bisphosphate nucleotidase CysQ.